The sequence spans 461 residues: Protein DVR-1 homolog (461 aa).

The N-terminal stretch at 1 to 30 (MEYSRKTYLDLNIMAKYILILSLFFGPGLS) is a signal peptide. The propeptide occupies 31 to 338 (WDVFYSGDED…QKKGGKRPRK (308 aa)). Asparagine 149 carries N-linked (GlcNAc...) asparagine glycosylation. The interval 317–351 (SHLRRNRRAATRQKKGGKRPRKPDTDNDIASRDSA) is disordered. A compositionally biased stretch (basic residues) spans 318-337 (HLRRNRRAATRQKKGGKRPR). Positions 338–347 (KPDTDNDIAS) are enriched in basic and acidic residues. 3 disulfides stabilise this stretch: cysteine 360–cysteine 426, cysteine 389–cysteine 458, and cysteine 393–cysteine 460. N-linked (GlcNAc...) asparagine glycosylation occurs at asparagine 402.

It belongs to the TGF-beta family. As to quaternary structure, homodimer; disulfide-linked.

It localises to the secreted. The sequence is that of Protein DVR-1 homolog (DVR1) from Strongylocentrotus purpuratus (Purple sea urchin).